Here is a 268-residue protein sequence, read N- to C-terminus: MSGKANASKKNFEQLKRNPKRKKDNEEVVLSEKKVRNTVKRNKNHLKDLFSEGQTKHTNLKQIKIAPNKRKTWQPLSKSTRDYLQTMMESVLRTILSDRIKDKEEIQYHLNFLKNRLLQLCETLKVPPKKMEDLTNVSRLLNMERARGKANEEGLALLQEEIDKMVETTELMTGNIQSLKNKIQILASEVEEEEERVKQIHQINTSGVLSLPELSQKTLKAPTLQKEILALIPNQNALLKDLDILHNSSHMKSMSTFIEEAYKKLNAS.

The tract at residues 1 to 31 is disordered; sequence MSGKANASKKNFEQLKRNPKRKKDNEEVVLS. Phosphoserine is present on Ser-31. Residues 170-203 adopt a coiled-coil conformation; the sequence is ELMTGNIQSLKNKIQILASEVEEEEERVKQIHQI. The residue at position 249 (Ser-249) is a Phosphoserine.

This sequence belongs to the CENP-Q/OKP1 family. In terms of assembly, component of the CENPA-CAD complex, composed of CENPI, CENPK, CENPL, CENPO, CENPP, CENPQ, CENPR and CENPS. The CENPA-CAD complex interacts with the CENPA-NAC complex, at least composed of CENPA, CENPC, CENPH, CENPM, CENPN, CENPT and CENPU.

The protein localises to the nucleus. It is found in the chromosome. It localises to the centromere. Its function is as follows. Component of the CENPA-CAD (nucleosome distal) complex, a complex recruited to centromeres which is involved in assembly of kinetochore proteins, mitotic progression and chromosome segregation. May be involved in incorporation of newly synthesized CENPA into centromeres via its interaction with the CENPA-NAC complex. Plays an important role in chromosome congression and in the recruitment of CENP-O complex (which comprises CENPO, CENPP, CENPQ and CENPU), CENPE and PLK1 to the kinetochores. This chain is Centromere protein Q (CENPQ), found in Macaca fascicularis (Crab-eating macaque).